The primary structure comprises 139 residues: Early placenta insulin-like peptide (139 aa).

The N-terminal stretch at M1 to A25 is a signal peptide. Disulfide bonds link C31–C125, C43–C138, and C124–C129. A propeptide spans L59–R114 (c peptide).

This sequence belongs to the insulin family. Expressed in placenta, uterus and in fetal perichondrium. Expression levels were increased in both early placentas and molar pregnancies and were reduced in choriocarcinoma cells.

The protein resides in the secreted. Its function is as follows. May play an important role in trophoblast development and in the regulation of bone formation. The chain is Early placenta insulin-like peptide (INSL4) from Homo sapiens (Human).